The chain runs to 486 residues: Bifunctional protein HldE (486 aa).

A ribokinase region spans residues 1 to 329 (MSSRLSGLLD…AALSVAGPVG (329 aa)). 204–207 (NAFE) lines the ATP pocket. Asp-274 is a catalytic residue. The interval 355–486 (FTNGCFDILH…AIIARSETGK (132 aa)) is cytidylyltransferase.

In the N-terminal section; belongs to the carbohydrate kinase PfkB family. The protein in the C-terminal section; belongs to the cytidylyltransferase family. As to quaternary structure, homodimer.

It catalyses the reaction D-glycero-beta-D-manno-heptose 7-phosphate + ATP = D-glycero-beta-D-manno-heptose 1,7-bisphosphate + ADP + H(+). It carries out the reaction D-glycero-beta-D-manno-heptose 1-phosphate + ATP + H(+) = ADP-D-glycero-beta-D-manno-heptose + diphosphate. Its pathway is nucleotide-sugar biosynthesis; ADP-L-glycero-beta-D-manno-heptose biosynthesis; ADP-L-glycero-beta-D-manno-heptose from D-glycero-beta-D-manno-heptose 7-phosphate: step 1/4. It functions in the pathway nucleotide-sugar biosynthesis; ADP-L-glycero-beta-D-manno-heptose biosynthesis; ADP-L-glycero-beta-D-manno-heptose from D-glycero-beta-D-manno-heptose 7-phosphate: step 3/4. Functionally, catalyzes the phosphorylation of D-glycero-D-manno-heptose 7-phosphate at the C-1 position to selectively form D-glycero-beta-D-manno-heptose-1,7-bisphosphate. Its function is as follows. Catalyzes the ADP transfer from ATP to D-glycero-beta-D-manno-heptose 1-phosphate, yielding ADP-D-glycero-beta-D-manno-heptose. The chain is Bifunctional protein HldE from Hyphomonas neptunium (strain ATCC 15444).